The following is a 313-amino-acid chain: Small glutamine-rich tetratricopeptide repeat-containing protein alpha (313 aa).

The tract at residues 66 to 100 (ATGKEMPQDLRSPARTPPSEEDSAEAERLKTEGNE) is disordered. S77 carries the post-translational modification Phosphoserine. T81 bears the Phosphothreonine mark. Position 84 is a phosphoserine (S84). Basic and acidic residues predominate over residues 90 to 100 (EAERLKTEGNE). TPR repeat units lie at residues 91 to 124 (AERLKTEGNEQMKVENFEAAVHFYGKAIELNPAN), 125 to 158 (AVYFCNRAAAYSKLGNYAGAVQDCERAICIDPAY), and 159 to 192 (SKAYGRMGLALSSLNKHVEAVAYYKKALELDPDN). The residue at position 137 (K137) is an N6-acetyllysine. The segment at 250-269 (MISGGNNPLGTPGTSPSQND) is disordered. S301 is subject to Phosphoserine. T303 is modified (phosphothreonine). The residue at position 305 (S305) is a Phosphoserine.

This sequence belongs to the SGT family. In terms of assembly, homodimer. Homooligomer. Interacts with DNAJC5 and DNAJC5B. Interacts (via TPR repeats) with HSP90AA1. Interacts (via Gln-rich region) with SLC2A1. Interacts with HSP90AB1. Interacts (via TPR repeats) with HSPA8/Hsc70; the interaction is direct. Interacts with BAG6 (via ubiquitin-like domain); interaction prevents interaction between BAG6 and RNF126. Forms a multiprotein complex, at least composed of DNAJB12, DNAJB14, HSPA8/Hsc70 and SGTA; interaction with DNAJB14 and HSPA8/Hsc70 is direct. As to quaternary structure, (Microbial infection) Interacts with Vpu and Gag from HIV-1. (Microbial infection) Interacts with SARS-CoV accessory protein 7a. As to expression, ubiquitous.

It is found in the cytoplasm. It localises to the nucleus. In terms of biological role, co-chaperone that binds misfolded and hydrophobic patches-containing client proteins in the cytosol. Mediates their targeting to the endoplasmic reticulum but also regulates their sorting to the proteasome when targeting fails. Functions in tail-anchored/type II transmembrane proteins membrane insertion constituting with ASNA1 and the BAG6 complex a targeting module. Functions upstream of the BAG6 complex and ASNA1, binding more rapidly the transmembrane domain of newly synthesized proteins. It is also involved in the regulation of the endoplasmic reticulum-associated misfolded protein catabolic process via its interaction with BAG6: collaborates with the BAG6 complex to maintain hydrophobic substrates in non-ubiquitinated states. Competes with RNF126 for interaction with BAG6, preventing the ubiquitination of client proteins associated with the BAG6 complex. Binds directly to HSC70 and HSP70 and regulates their ATPase activity. (Microbial infection) In case of infection by polyomavirus, involved in the virus endoplasmic reticulum membrane penetration and infection via interaction with DNAJB12, DNAJB14 and HSPA8/Hsc70. The protein is Small glutamine-rich tetratricopeptide repeat-containing protein alpha (SGTA) of Homo sapiens (Human).